The following is a 753-amino-acid chain: 5-methyltetrahydropteroyltriglutamate--homocysteine methyltransferase (753 aa).

5-methyltetrahydropteroyltri-L-glutamate contacts are provided by residues Arg-17–Lys-20 and Lys-117. L-homocysteine-binding positions include Ile-431–Ser-433 and Glu-484. Residues Ile-431–Ser-433 and Glu-484 contribute to the L-methionine site. Residues Arg-515–Cys-516 and Trp-561 contribute to the 5-methyltetrahydropteroyltri-L-glutamate site. Residue Asp-599 participates in L-homocysteine binding. Asp-599 lines the L-methionine pocket. Glu-605 is a 5-methyltetrahydropteroyltri-L-glutamate binding site. Residues His-641, Cys-643, and Glu-665 each contribute to the Zn(2+) site. The Proton donor role is filled by His-694. Cys-726 provides a ligand contact to Zn(2+).

Belongs to the vitamin-B12 independent methionine synthase family. Zn(2+) serves as cofactor.

The catalysed reaction is 5-methyltetrahydropteroyltri-L-glutamate + L-homocysteine = tetrahydropteroyltri-L-glutamate + L-methionine. Its pathway is amino-acid biosynthesis; L-methionine biosynthesis via de novo pathway; L-methionine from L-homocysteine (MetE route): step 1/1. Functionally, catalyzes the transfer of a methyl group from 5-methyltetrahydrofolate to homocysteine resulting in methionine formation. The polypeptide is 5-methyltetrahydropteroyltriglutamate--homocysteine methyltransferase (Klebsiella pneumoniae (strain 342)).